The sequence spans 33 residues: Cytochrome b6-f complex subunit 8 (33 aa).

A helical transmembrane segment spans residues 2–22 (LITLGWASLAALFSFSIAMVV).

This sequence belongs to the PetN family. As to quaternary structure, the 4 large subunits of the cytochrome b6-f complex are cytochrome b6, subunit IV (17 kDa polypeptide, PetD), cytochrome f and the Rieske protein, while the 4 small subunits are PetG, PetL, PetM and PetN. The complex functions as a dimer.

The protein localises to the plastid. It is found in the organellar chromatophore thylakoid membrane. Functionally, component of the cytochrome b6-f complex, which mediates electron transfer between photosystem II (PSII) and photosystem I (PSI), cyclic electron flow around PSI, and state transitions. In Paulinella chromatophora, this protein is Cytochrome b6-f complex subunit 8.